The primary structure comprises 447 residues: Cobyrinate a,c-diamide synthase (447 aa).

A GATase cobBQ-type domain is found at 252–439 (KIAIAFDESF…AHQHAVGNPY (188 aa)). C331 (nucleophile) is an active-site residue.

It belongs to the CobB/CbiA family. The cofactor is Mg(2+).

The catalysed reaction is cob(II)yrinate + 2 L-glutamine + 2 ATP + 2 H2O = cob(II)yrinate a,c diamide + 2 L-glutamate + 2 ADP + 2 phosphate + 2 H(+). It catalyses the reaction Ni-sirohydrochlorin + 2 L-glutamine + 2 ATP + 2 H2O = Ni-sirohydrochlorin a,c-diamide + 2 L-glutamate + 2 ADP + 2 phosphate + 2 H(+). Its pathway is cofactor biosynthesis; adenosylcobalamin biosynthesis; cob(II)yrinate a,c-diamide from sirohydrochlorin (anaerobic route): step 10/10. Functionally, catalyzes the ATP-dependent amidation of the two carboxylate groups at positions a and c of cobyrinate, using either L-glutamine or ammonia as the nitrogen source. Involved in the biosynthesis of the unique nickel-containing tetrapyrrole coenzyme F430, the prosthetic group of methyl-coenzyme M reductase (MCR), which plays a key role in methanogenesis and anaerobic methane oxidation. Catalyzes the ATP-dependent amidation of the two carboxylate groups at positions a and c of Ni-sirohydrochlorin, using L-glutamine or ammonia as the nitrogen source. This is Cobyrinate a,c-diamide synthase from Methanococcus vannielii (strain ATCC 35089 / DSM 1224 / JCM 13029 / OCM 148 / SB).